A 312-amino-acid polypeptide reads, in one-letter code: Ribonuclease Z (312 aa).

Residues histidine 63, histidine 65, aspartate 67, histidine 68, histidine 141, aspartate 212, and histidine 270 each coordinate Zn(2+). Catalysis depends on aspartate 67, which acts as the Proton acceptor.

The protein belongs to the RNase Z family. As to quaternary structure, homodimer. The cofactor is Zn(2+).

It catalyses the reaction Endonucleolytic cleavage of RNA, removing extra 3' nucleotides from tRNA precursor, generating 3' termini of tRNAs. A 3'-hydroxy group is left at the tRNA terminus and a 5'-phosphoryl group is left at the trailer molecule.. Its function is as follows. Zinc phosphodiesterase, which displays some tRNA 3'-processing endonuclease activity. Probably involved in tRNA maturation, by removing a 3'-trailer from precursor tRNA. This chain is Ribonuclease Z, found in Latilactobacillus sakei subsp. sakei (strain 23K) (Lactobacillus sakei subsp. sakei).